The primary structure comprises 345 residues: Fe-S cluster assembly protein DRE2 (345 aa).

The segment at 11–166 (FSHSSNGVVL…SIGSSSGSSS (156 aa)) is N-terminal SAM-like domain. The disordered stretch occupies residues 147–166 (SKPATASSSFSIGSSSGSSS). A compositionally biased stretch (low complexity) spans 153 to 166 (SSSFSIGSSSGSSS). The interval 167 to 210 (ALPLRRKLGSGASANAKKSLWATQPASANDLIDEASLLRDADFV) is linker. Residues Cys-220, Cys-233, Cys-236, and Cys-238 each coordinate [2Fe-2S] cluster. Positions 220–238 (CDVGAGQGKKKKACKGCTC) are fe-S binding site A. Residues Cys-307, Cys-310, Cys-318, and Cys-321 each contribute to the [4Fe-4S] cluster site. Short sequence motifs (cx2C motif) lie at residues 307–310 (CGSC) and 318–321 (CSSC). Residues 307-321 (CGSCFLGDAFRCSSC) form a fe-S binding site B region.

Belongs to the anamorsin family. Monomer. Interacts with TAH18. Interacts with MIA40. [2Fe-2S] cluster is required as a cofactor. Requires [4Fe-4S] cluster as cofactor.

The protein localises to the cytoplasm. Its subcellular location is the mitochondrion intermembrane space. Component of the cytosolic iron-sulfur (Fe-S) protein assembly (CIA) machinery required for the maturation of extramitochondrial Fe-S proteins. Part of an electron transfer chain functioning in an early step of cytosolic Fe-S biogenesis, facilitating the de novo assembly of a [4Fe-4S] cluster on the scaffold complex CFD1-NBP35. Electrons are transferred to DRE2 from NADPH via the FAD- and FMN-containing protein TAH18. TAH18-DRE2 are also required for the assembly of the diferric tyrosyl radical cofactor of ribonucleotide reductase (RNR), probably by providing electrons for reduction during radical cofactor maturation in the catalytic small subunit RNR2. The protein is Fe-S cluster assembly protein DRE2 of Mycosarcoma maydis (Corn smut fungus).